We begin with the raw amino-acid sequence, 310 residues long: Homoserine kinase (310 aa).

Residue 91–101 (PIGSGLGSSAC) coordinates ATP.

It belongs to the GHMP kinase family. Homoserine kinase subfamily.

The protein resides in the cytoplasm. The enzyme catalyses L-homoserine + ATP = O-phospho-L-homoserine + ADP + H(+). The protein operates within amino-acid biosynthesis; L-threonine biosynthesis; L-threonine from L-aspartate: step 4/5. Its function is as follows. Catalyzes the ATP-dependent phosphorylation of L-homoserine to L-homoserine phosphate. This chain is Homoserine kinase, found in Escherichia coli (strain SMS-3-5 / SECEC).